A 272-amino-acid polypeptide reads, in one-letter code: MSTDSESKRRAYREEKEGARKKSVKLAPEATPESKPDLPRKRYYRQRAHSNPFSDHSLDYPRNPDAMEWGKLYPEYANTDKKVEIADIGCGYGGLMIGLAKEYPQTMILGMEIRVQVTQYVEDRIIALREKHEKDEVNYQNIAVLRGNAMKFLPNFFHRGQLKKMFFCFPDPHFKQRKHKARIITTTLLSEYAYVLREEGVLYTITDVEDLHIWMVKHLDDHPLFERLDKEWEKNDKCVSIMYGSTEEGQKVARNKGSKFVACFRRVANPEE.

Residues 1-20 are compositionally biased toward basic and acidic residues; that stretch reads MSTDSESKRRAYREEKEGAR. The tract at residues 1–43 is disordered; it reads MSTDSESKRRAYREEKEGARKKSVKLAPEATPESKPDLPRKRY. Residues glycine 89, 112-113, 148-149, and cysteine 168 each bind S-adenosyl-L-methionine; these read EI and NA. Aspartate 171 is an active-site residue. Position 246–248 (246–248) interacts with S-adenosyl-L-methionine; sequence TEE.

The protein belongs to the class I-like SAM-binding methyltransferase superfamily. TrmB family. In terms of assembly, forms a complex with TRM82.

Its subcellular location is the nucleus. It carries out the reaction guanosine(46) in tRNA + S-adenosyl-L-methionine = N(7)-methylguanosine(46) in tRNA + S-adenosyl-L-homocysteine. Its pathway is tRNA modification; N(7)-methylguanine-tRNA biosynthesis. In terms of biological role, catalyzes the formation of N(7)-methylguanine at position 46 (m7G46) in tRNA. This is tRNA (guanine-N(7)-)-methyltransferase from Meyerozyma guilliermondii (strain ATCC 6260 / CBS 566 / DSM 6381 / JCM 1539 / NBRC 10279 / NRRL Y-324) (Yeast).